A 338-amino-acid chain; its full sequence is Glycerol-3-phosphate dehydrogenase [NAD(P)+] (338 aa).

Residues tryptophan 20 and lysine 110 each contribute to the NADPH site. 3 residues coordinate sn-glycerol 3-phosphate: lysine 110, glycine 141, and serine 143. NADPH is bound at residue alanine 145. Residues lysine 197, aspartate 250, serine 260, arginine 261, and asparagine 262 each coordinate sn-glycerol 3-phosphate. Lysine 197 serves as the catalytic Proton acceptor. Arginine 261 provides a ligand contact to NADPH. Position 287 (glutamate 287) interacts with NADPH.

The protein belongs to the NAD-dependent glycerol-3-phosphate dehydrogenase family.

The protein resides in the cytoplasm. It catalyses the reaction sn-glycerol 3-phosphate + NAD(+) = dihydroxyacetone phosphate + NADH + H(+). It carries out the reaction sn-glycerol 3-phosphate + NADP(+) = dihydroxyacetone phosphate + NADPH + H(+). It functions in the pathway membrane lipid metabolism; glycerophospholipid metabolism. In terms of biological role, catalyzes the reduction of the glycolytic intermediate dihydroxyacetone phosphate (DHAP) to sn-glycerol 3-phosphate (G3P), the key precursor for phospholipid synthesis. The sequence is that of Glycerol-3-phosphate dehydrogenase [NAD(P)+] from Aster yellows witches'-broom phytoplasma (strain AYWB).